Here is a 78-residue protein sequence, read N- to C-terminus: Putative defensin-like protein 288 (78 aa).

A signal peptide spans 1–21 (MSNLRLTIAVFLAALFQTLWW).

It belongs to the DEFL family.

Its subcellular location is the secreted. This chain is Putative defensin-like protein 288, found in Arabidopsis thaliana (Mouse-ear cress).